The primary structure comprises 326 residues: Aldo-keto reductase family 1 member D1 (326 aa).

NADP(+)-binding positions include 22–26 and D52; that span reads GLGTY. Y26 contributes to the substrate binding site. The substrate site is built by Y57, W88, E119, and Y131. The Proton donor role is filled by Y57. NADP(+)-binding positions include 168–169, Q192, and 219–224; these read SN and YSPLGT. Position 230 (W230) interacts with substrate. 273-283 contacts NADP(+); it reads KSTTPERIKEN.

The protein belongs to the aldo/keto reductase family. In terms of processing, the N-terminus is blocked.

The protein resides in the cytoplasm. It carries out the reaction 5beta-cholestan-3-one + NADP(+) = cholest-4-en-3-one + NADPH + H(+). The catalysed reaction is 4,5beta-dihydrocortisone + NADP(+) = cortisone + NADPH + H(+). It catalyses the reaction cortisol + NADPH + H(+) = 5beta-dihydrocortisol + NADP(+). The enzyme catalyses corticosterone + NADPH + H(+) = 5beta-dihydrocorticosterone + NADP(+). It carries out the reaction 7alpha,12alpha-dihydroxycholest-4-en-3-one + NADPH + H(+) = 7alpha,12alpha-dihydroxy-5beta-cholestan-3-one + NADP(+). The catalysed reaction is 7alpha-hydroxycholest-4-en-3-one + NADPH + H(+) = 7alpha-hydroxy-5beta-cholestan-3-one + NADP(+). It catalyses the reaction epitestosterone + NADPH + H(+) = 5beta-dihydroepitestosterone + NADP(+). The enzyme catalyses androst-4-ene-3,17-dione + NADPH + H(+) = 5beta-androstane-3,17-dione + NADP(+). It carries out the reaction progesterone + NADPH + H(+) = 5beta-pregnan-3,20-dione + NADP(+). The catalysed reaction is 21-hydroxyprogesterone + NADPH + H(+) = 5beta-dihydrodeoxycorticosterone + NADP(+). It catalyses the reaction aldosterone + NADPH + H(+) = 5beta-dihydroaldosterone + NADP(+). The enzyme catalyses 17beta-hydroxyandrosta-1,4-dien-3-one + NADPH + H(+) = 17beta-hydroxy-5beta-androst-1-en-3-one + NADP(+). It carries out the reaction 17beta-hydroxyestr-4-en-3-one + NADPH + H(+) = 17beta-hydroxy-5beta-estran-3-one + NADP(+). The catalysed reaction is 5beta-dihydrotestosterone + NADP(+) = testosterone + NADPH + H(+). It catalyses the reaction androst-4-ene-3,11,17-trione + NADPH + H(+) = 17beta-hydroxyandrost-4-ene-3,11-dione + NADP(+). Its activity is regulated as follows. Subject to inhibition by high substrate concentrations. Inhibited by testosterone concentrations above 10 uM. Inhibited by the primary and secondary bile acids chenodeoxycholic acid and ursodeoxycholic acid. Catalyzes the stereospecific NADPH-dependent reduction of the C4-C5 double bond of bile acid intermediates and steroid hormones carrying a delta(4)-3-one structure to yield an A/B cis-ring junction. This cis-configuration is crucial for bile acid biosynthesis and plays important roles in steroid metabolism. Capable of reducing a broad range of delta-(4)-3-ketosteroids from C18 (such as, 17beta-hydroxyestr-4-en-3-one) to C27 (such as, 7alpha-hydroxycholest-4-en-3-one). The sequence is that of Aldo-keto reductase family 1 member D1 (Akr1d1) from Rattus norvegicus (Rat).